A 664-amino-acid chain; its full sequence is Protein-arginine deiminase type-3 (664 aa).

The protein belongs to the protein arginine deiminase family. The cofactor is Ca(2+). Hair follicles, and epidermis at very low levels.

The protein localises to the cytoplasm. The enzyme catalyses L-arginyl-[protein] + H2O = L-citrullyl-[protein] + NH4(+). Functionally, catalyzes the deimination of arginine residues of proteins. This chain is Protein-arginine deiminase type-3 (PADI3), found in Homo sapiens (Human).